The following is a 945-amino-acid chain: Endo-1,4-beta-xylanase 1 (945 aa).

Basic and acidic residues predominate over residues 16–41 (NGDRNPDKKSRESMEVSRKDNEEPEK). Residues 16-50 (NGDRNPDKKSRESMEVSRKDNEEPEKQNNNNVASI) are disordered. CBM-cenC domains are found at residues 57–197 (NVIV…EGPS), 227–362 (IVVN…IEGP), and 397–541 (NILT…GPSS). Residues asparagine 86, asparagine 239, asparagine 305, asparagine 349, asparagine 417, asparagine 453, and asparagine 687 are each glycosylated (N-linked (GlcNAc...) asparagine). A GH10 domain is found at 589–884 (SGASVRVRQI…NEAGKRFLAV (296 aa)). Residue glutamate 718 is the Proton donor of the active site. Glutamate 819 functions as the Nucleophile in the catalytic mechanism.

It belongs to the glycosyl hydrolase 10 (cellulase F) family. As to expression, predominantly expressed in vascular bundles, but not in vessel cells. Mostly expressed in stems, at lower levels in roots, and weakly in inflorescences and seedlings.

It is found in the secreted. The protein localises to the cell wall. The catalysed reaction is Endohydrolysis of (1-&gt;4)-beta-D-xylosidic linkages in xylans.. It functions in the pathway glycan degradation; xylan degradation. Binds to and hydrolyzes insoluble and soluble xylan substrates. Exhibits xylanase activity. In Arabidopsis thaliana (Mouse-ear cress), this protein is Endo-1,4-beta-xylanase 1.